The chain runs to 122 residues: UPF0231 protein VIBHAR_03438 (122 aa).

This sequence belongs to the UPF0231 family.

In Vibrio campbellii (strain ATCC BAA-1116), this protein is UPF0231 protein VIBHAR_03438.